The chain runs to 113 residues: U11-theraphotoxin-Hhn1a (113 aa).

The signal sequence occupies residues 1–21; that stretch reads MNTVRVTFLLVFVLAVSLGRA. A propeptide spanning residues 22–74 is cleaved from the precursor; the sequence is DKEENRMEMQEKTEQGKSYLDFAENLLLQKLEELEAKLLEEDSEESRNSRQKR. Residues 61 to 83 form a disordered region; sequence EEDSEESRNSRQKRCIGEGVPCD. 3 disulfides stabilise this stretch: C75–C90, C82–C95, and C89–C110.

This sequence belongs to the neurotoxin 14 (magi-1) family. 01 (HNTX-16) subfamily. As to expression, expressed by the venom gland.

The protein localises to the secreted. Probable ion channel inhibitor. This Cyriopagopus hainanus (Chinese bird spider) protein is U11-theraphotoxin-Hhn1a.